We begin with the raw amino-acid sequence, 367 residues long: Trans-enoyl reductase ffsC (367 aa).

55–58 (CDWK) provides a ligand contact to NADP(+). A substrate-binding site is contributed by 143 to 150 (TGIGTLGL). NADP(+) is bound by residues 203–206 (SAKN), tyrosine 221, and 268–269 (LE). 288–292 (GMAIL) contacts substrate. 357-358 (VS) lines the NADP(+) pocket.

It belongs to the zinc-containing alcohol dehydrogenase family. Monomer.

It participates in mycotoxin biosynthesis. Its function is as follows. Trans-enoyl reductase; part of the gene cluster that mediates the biosynthesis of the cytotoxic leucine-containing cytochalasans, including aspochalasin C, aspochalasin E, TMC-169, flavichalasine F, aspergillin PZ, aspochalasin M and flavichalasine G. The first step in the pathway is catalyzed by the hybrid PKS-NRPS ffsA that utilizes 8 units of malonyl-CoA to iteratively assemble the octaketide chain before addition of L-leucine by the C-terminal NRPS modules. Because ffsA lacks a designated enoylreductase (ER) domain, the required activity is provided the enoyl reductase fssC. The methyltransferase (MT) domain of ffsA catalyzes the alpha-methylation at C10 and C14 using S-adenosyl-L-methionine as the methyl-donating cosubstrate. Reduction by the hydrolyase ffsE, followed by dehydration and intra-molecular Diels-Alder cyclization by the Diels-Alderase ffsF then yield the required isoindolone-fused macrocycle. A number of oxidative steps catalyzed by the tailoring cytochrome P450 monooxygenase ffsD, the FAD-linked oxidoreductase ffsJ and the short-chain dehydrogenase/reductase ffsI, are further required to afford the final products. This chain is Trans-enoyl reductase ffsC, found in Aspergillus flavipes.